We begin with the raw amino-acid sequence, 302 residues long: Probable 2-(5''-triphosphoribosyl)-3'-dephosphocoenzyme-A synthase (302 aa).

It belongs to the CitG/MdcB family.

The catalysed reaction is 3'-dephospho-CoA + ATP = 2'-(5''-triphospho-alpha-D-ribosyl)-3'-dephospho-CoA + adenine. The polypeptide is Probable 2-(5''-triphosphoribosyl)-3'-dephosphocoenzyme-A synthase (Citrobacter koseri (strain ATCC BAA-895 / CDC 4225-83 / SGSC4696)).